The sequence spans 400 residues: Enoyl-[acyl-carrier-protein] reductase [NADH] 1 (400 aa).

NAD(+)-binding positions include 48 to 53 (GSSSGY), 74 to 75 (FE), 111 to 112 (DA), and 139 to 140 (LA). Tyr-225 serves as a coordination point for substrate. Tyr-235 functions as the Proton donor in the catalytic mechanism. Residues Lys-244 and 273–275 (VVT) contribute to the NAD(+) site.

This sequence belongs to the TER reductase family. In terms of assembly, monomer.

The catalysed reaction is a 2,3-saturated acyl-[ACP] + NAD(+) = a (2E)-enoyl-[ACP] + NADH + H(+). Its pathway is lipid metabolism; fatty acid biosynthesis. Involved in the final reduction of the elongation cycle of fatty acid synthesis (FAS II). Catalyzes the reduction of a carbon-carbon double bond in an enoyl moiety that is covalently linked to an acyl carrier protein (ACP). This Photobacterium profundum (strain SS9) protein is Enoyl-[acyl-carrier-protein] reductase [NADH] 1.